The chain runs to 1059 residues: DNA (cytosine-5)-methyltransferase CMT1 (1059 aa).

Disordered stretches follow at residues 1–196 (MVPE…GALA) and 230–272 (CVGE…DEAR). Over residues 29–41 (AEAEAVADLDEID) the composition is skewed to acidic residues. Basic and acidic residues-rich tracts occupy residues 42-79 (REMS…EKAA), 92-129 (REMP…EKAA), and 147-157 (SRGKRQRGVEK). A compositionally biased stretch (basic residues) spans 158-167 (VKRRTRKKTA). Over residues 252–262 (RRVEDSDDHFV) the composition is skewed to basic and acidic residues. Residues 312–436 (EIYHLDDDVY…VAYSTFANLP (125 aa)) form the BAH domain. Residues 479-1017 (ASLLDLYSGC…YALGLAYRGE (539 aa)) form the SAM-dependent MTase C5-type domain. The Chromo domain maps to 584 to 649 (FDVEELLEIC…KGHKENILPL (66 aa)). C662 is an active-site residue.

This sequence belongs to the class I-like SAM-binding methyltransferase superfamily. C5-methyltransferase family.

The protein resides in the nucleus. It carries out the reaction a 2'-deoxycytidine in DNA + S-adenosyl-L-methionine = a 5-methyl-2'-deoxycytidine in DNA + S-adenosyl-L-homocysteine + H(+). Involved in CpXpG DNA methylation. May not play a major role in maintaining CpXpG methylation. The polypeptide is DNA (cytosine-5)-methyltransferase CMT1 (Oryza sativa subsp. japonica (Rice)).